The sequence spans 240 residues: Cysteine-rich venom protein triflin (240 aa).

A signal peptide spans 1-19 (MIAFIVLPILAAVLQQSSG). The 128-residue stretch at 39 to 166 (DLHNSLRRSV…KYSYFYVCQY (128 aa)) folds into the SCP domain. 8 cysteine pairs are disulfide-bonded: Cys75–Cys153, Cys92–Cys167, Cys148–Cys164, Cys186–Cys193, Cys189–Cys198, Cys202–Cys235, Cys211–Cys229, and Cys220–Cys233. One can recognise a ShKT domain in the interval 202–235 (CTRENEFTNCDSLVQKSSCQDNYMKSKCPASCFC).

Belongs to the CRISP family. In terms of assembly, forms a stable, non-covalent complex with SSP-2. As to expression, expressed by the venom gland.

It is found in the secreted. Functionally, blocks contraction of smooth muscle elicited by high potassium-induced depolarization. May target voltage-gated calcium channels (Cav) on smooth muscle. This is Cysteine-rich venom protein triflin from Protobothrops flavoviridis (Habu).